Here is a 75-residue protein sequence, read N- to C-terminus: DNA-directed RNA polymerase subunit omega (75 aa).

This sequence belongs to the RNA polymerase subunit omega family. In terms of assembly, in cyanobacteria the RNAP catalytic core is composed of 2 alpha, 1 beta, 1 beta', 1 gamma and 1 omega subunit. When a sigma factor is associated with the core the holoenzyme is formed, which can initiate transcription.

It carries out the reaction RNA(n) + a ribonucleoside 5'-triphosphate = RNA(n+1) + diphosphate. Promotes RNA polymerase assembly. Latches the N- and C-terminal regions of the beta' subunit thereby facilitating its interaction with the beta and alpha subunits. The protein is DNA-directed RNA polymerase subunit omega of Cyanothece sp. (strain PCC 7425 / ATCC 29141).